We begin with the raw amino-acid sequence, 89 residues long: MSITLERKAALIAEHARSTGDTGSAEVQVAILSERIANLTEHFKTHKKDNHSRRGLLKLVSQRRRLLDHLKKSDAARYQSLIEKLGLRR.

It belongs to the universal ribosomal protein uS15 family. As to quaternary structure, part of the 30S ribosomal subunit. Forms a bridge to the 50S subunit in the 70S ribosome, contacting the 23S rRNA.

One of the primary rRNA binding proteins, it binds directly to 16S rRNA where it helps nucleate assembly of the platform of the 30S subunit by binding and bridging several RNA helices of the 16S rRNA. Functionally, forms an intersubunit bridge (bridge B4) with the 23S rRNA of the 50S subunit in the ribosome. The polypeptide is Small ribosomal subunit protein uS15 (Caulobacter vibrioides (strain NA1000 / CB15N) (Caulobacter crescentus)).